Consider the following 302-residue polypeptide: Epoxyqueuosine reductase (302 aa).

D128 (proton donor) is an active-site residue. In terms of domain architecture, 4Fe-4S ferredoxin-type 1 spans L170–V202. The [4Fe-4S] cluster site is built by C182, C185, C188, C192, C207, C234, C237, and C241. The 31-residue stretch at N221–S251 folds into the 4Fe-4S ferredoxin-type 2 domain.

The protein belongs to the QueG family. As to quaternary structure, monomer. The cofactor is cob(II)alamin. Requires [4Fe-4S] cluster as cofactor.

Its subcellular location is the cytoplasm. It carries out the reaction epoxyqueuosine(34) in tRNA + AH2 = queuosine(34) in tRNA + A + H2O. It participates in tRNA modification; tRNA-queuosine biosynthesis. In terms of biological role, catalyzes the conversion of epoxyqueuosine (oQ) to queuosine (Q), which is a hypermodified base found in the wobble positions of tRNA(Asp), tRNA(Asn), tRNA(His) and tRNA(Tyr). The polypeptide is Epoxyqueuosine reductase (Leadbetterella byssophila (strain DSM 17132 / JCM 16389 / KACC 11308 / NBRC 106382 / 4M15)).